Reading from the N-terminus, the 408-residue chain is Imidazolonepropionase (408 aa).

Fe(3+) contacts are provided by histidine 73 and histidine 75. Zn(2+) is bound by residues histidine 73 and histidine 75. Arginine 82, tyrosine 145, and histidine 178 together coordinate 4-imidazolone-5-propanoate. Tyrosine 145 contacts N-formimidoyl-L-glutamate. Residue histidine 243 participates in Fe(3+) binding. Histidine 243 is a Zn(2+) binding site. A 4-imidazolone-5-propanoate-binding site is contributed by glutamine 246. Residue aspartate 318 coordinates Fe(3+). Aspartate 318 lines the Zn(2+) pocket. 2 residues coordinate N-formimidoyl-L-glutamate: asparagine 320 and glycine 322. Serine 323 contacts 4-imidazolone-5-propanoate.

The protein belongs to the metallo-dependent hydrolases superfamily. HutI family. The cofactor is Zn(2+). Fe(3+) is required as a cofactor.

It localises to the cytoplasm. The enzyme catalyses 4-imidazolone-5-propanoate + H2O = N-formimidoyl-L-glutamate. Its pathway is amino-acid degradation; L-histidine degradation into L-glutamate; N-formimidoyl-L-glutamate from L-histidine: step 3/3. Catalyzes the hydrolytic cleavage of the carbon-nitrogen bond in imidazolone-5-propanoate to yield N-formimidoyl-L-glutamate. It is the third step in the universal histidine degradation pathway. The protein is Imidazolonepropionase of Shewanella sp. (strain W3-18-1).